Here is a 579-residue protein sequence, read N- to C-terminus: MRNAQKSSGMPFHRYTPFQDQITVEMPDRTWPDKVITKAPRWCAVDLRDGNQALIDPMSPARKMKMFDLLVRMGYKEIEVGFPSASQTDFDFVRQLIEGNHIPDDVTIQVLTQAREHLIERTYESLVGAKQAIVHLYNSTSVLQRRVVFNQDEDGILDIALQGARLCRKYEETLADTHITYEYSPESFTGTELEYAVRVCNAVADVFEASADRQVIINLPATVEMATPNVYADSIEWMSRHLHPREGIILSLHPHNDRGTGVAAAELGYMAGADRIEGCLFGNGERTGNVDLVTLGLNLFVQGIDPMIDFSDIDDVRRTVEYCNQLPVPERSPYGGDLVFTAFSGSHQDAIKKGFEALERDAAAAGKDVADVTWQVPYLPVDPKDLGRSYEAVIRVNSQSGKGGVAYLLKNEHSLDLPRRAQIEFSGVIQRRTDTVGGEVSGAQLWQIFQDEYLPSGKADGQWGRYSLGSVKTETDDDGGMTLHASLTVDGAQVSRTGTGNGPIAALLNILTQDGVDVRVLDYSEHALSEGGNAMAAAYVECAVGERVLWGVGIDANTSMSSLKAVISAVNRAIRDAQS.

A Pyruvate carboxyltransferase domain is found at 40–314; it reads PRWCAVDLRD…DPMIDFSDID (275 aa). Asp49, His253, His255, and Asn289 together coordinate Mg(2+). The regulatory domain stretch occupies residues 456 to 579; the sequence is SGKADGQWGR…VNRAIRDAQS (124 aa).

This sequence belongs to the alpha-IPM synthase/homocitrate synthase family. LeuA type 2 subfamily. Homodimer. The cofactor is Mg(2+).

It localises to the cytoplasm. The catalysed reaction is 3-methyl-2-oxobutanoate + acetyl-CoA + H2O = (2S)-2-isopropylmalate + CoA + H(+). It functions in the pathway amino-acid biosynthesis; L-leucine biosynthesis; L-leucine from 3-methyl-2-oxobutanoate: step 1/4. In terms of biological role, catalyzes the condensation of the acetyl group of acetyl-CoA with 3-methyl-2-oxobutanoate (2-ketoisovalerate) to form 3-carboxy-3-hydroxy-4-methylpentanoate (2-isopropylmalate). This is 2-isopropylmalate synthase from Pseudarthrobacter chlorophenolicus (strain ATCC 700700 / DSM 12829 / CIP 107037 / JCM 12360 / KCTC 9906 / NCIMB 13794 / A6) (Arthrobacter chlorophenolicus).